Reading from the N-terminus, the 500-residue chain is MLIFEHSRPGRRNYSQSPKAAEATDIPEKLLRKTLPLLPEVSEMDAVRHYTRLSQKNFSIDTHFYPLGSCTMKYNPRACNSLAMLPQFLARHPRSPESTGQGFLACMYELQEILKDVTGMAGVSLTPMAGAQGELIGIAMIRAYHESRGDTARTEIIVPDAAHGTNPATAVMCGYKVVEIATDKEGNVDMAALKAAVGPKTAGLMLTNPSTLGVFEENVAEMSRIVHQAGGLLYYDGANLNAILGKVKPGDMGFDVIHINLHKTFSTPHGGGGPGSAPVGVAPRLLPFMPVPIVAFENGTYRWQTEKDIPQSIGRLSAHMGNAGVLLRAYVYVRLLGAEGMHRVAEFAALNANYLMAELRKAGFEIAYPNRRASHEFIVTLKDLKEKTGVTAMNLAKRLLDKGYHAPTTYFPLLVPECLLIEPAETESKETLDAFVTAMKEILEETRTQPDLVKSAPHTTPVRRLDDVKAARELDLAWKAPTRNITRTETLTPIPTVSVA.

The interval 1–25 (MLIFEHSRPGRRNYSQSPKAAEATD) is disordered. Position 263 is an N6-(pyridoxal phosphate)lysine (lysine 263).

The protein belongs to the GcvP family. C-terminal subunit subfamily. As to quaternary structure, the glycine cleavage system is composed of four proteins: P, T, L and H. In this organism, the P 'protein' is a heterodimer of two subunits. Pyridoxal 5'-phosphate is required as a cofactor.

It catalyses the reaction N(6)-[(R)-lipoyl]-L-lysyl-[glycine-cleavage complex H protein] + glycine + H(+) = N(6)-[(R)-S(8)-aminomethyldihydrolipoyl]-L-lysyl-[glycine-cleavage complex H protein] + CO2. The glycine cleavage system catalyzes the degradation of glycine. The P protein binds the alpha-amino group of glycine through its pyridoxal phosphate cofactor; CO(2) is released and the remaining methylamine moiety is then transferred to the lipoamide cofactor of the H protein. This Nitrosospira multiformis (strain ATCC 25196 / NCIMB 11849 / C 71) protein is Probable glycine dehydrogenase (decarboxylating) subunit 2.